The primary structure comprises 528 residues: Chaperonin GroEL, chloroplastic (528 aa).

Residues 29 to 32 (TLGP), 86 to 90 (DGTTT), Gly414, and Asp496 contribute to the ATP site.

It belongs to the chaperonin (HSP60) family. Forms a cylinder of 14 subunits composed of two heptameric rings stacked back-to-back. Interacts with the co-chaperonin GroES.

The protein resides in the plastid. Its subcellular location is the chloroplast. It catalyses the reaction ATP + H2O + a folded polypeptide = ADP + phosphate + an unfolded polypeptide.. In terms of biological role, together with its co-chaperonin GroES, plays an essential role in assisting protein folding. The GroEL-GroES system forms a nano-cage that allows encapsulation of the non-native substrate proteins and provides a physical environment optimized to promote and accelerate protein folding. In Porphyra purpurea (Red seaweed), this protein is Chaperonin GroEL, chloroplastic.